The primary structure comprises 313 residues: UPF0252 protein AF_0384 (313 aa).

The protein belongs to the UPF0252 family.

The sequence is that of UPF0252 protein AF_0384 from Archaeoglobus fulgidus (strain ATCC 49558 / DSM 4304 / JCM 9628 / NBRC 100126 / VC-16).